A 128-amino-acid polypeptide reads, in one-letter code: NADPH-dependent 7-cyano-7-deazaguanine reductase (128 aa).

The active-site Thioimide intermediate is Cys-34. Catalysis depends on Asp-41, which acts as the Proton donor. Substrate is bound by residues 56–58 and 75–76; these read VEL and HE.

The protein belongs to the GTP cyclohydrolase I family. QueF type 1 subfamily.

It is found in the cytoplasm. It catalyses the reaction 7-aminomethyl-7-carbaguanine + 2 NADP(+) = 7-cyano-7-deazaguanine + 2 NADPH + 3 H(+). Its pathway is tRNA modification; tRNA-queuosine biosynthesis. Functionally, catalyzes the NADPH-dependent reduction of 7-cyano-7-deazaguanine (preQ0) to 7-aminomethyl-7-deazaguanine (preQ1). This is NADPH-dependent 7-cyano-7-deazaguanine reductase from Thermomicrobium roseum (strain ATCC 27502 / DSM 5159 / P-2).